The following is a 311-amino-acid chain: Thioredoxin reductase (311 aa).

35-42 (ERGIPGGQ) is an FAD binding site. A disulfide bond links Cys134 and Cys137. Position 277 to 286 (277 to 286 (DVRDKGLRQI)) interacts with FAD.

This sequence belongs to the class-II pyridine nucleotide-disulfide oxidoreductase family. In terms of assembly, homodimer. It depends on FAD as a cofactor.

It is found in the cytoplasm. It catalyses the reaction [thioredoxin]-dithiol + NADP(+) = [thioredoxin]-disulfide + NADPH + H(+). The chain is Thioredoxin reductase (trxB) from Staphylococcus aureus (strain MRSA252).